Reading from the N-terminus, the 77-residue chain is MDYQRLLFLFAVAMVITTTVALPQDTALMDGQLQKRGTPCKCLGYTGVYWFMITRCPNGHGYNLSCPYFLGVCCVKK.

Residues 1 to 21 (MDYQRLLFLFAVAMVITTTVA) form the signal peptide. The propeptide occupies 22–34 (LPQDTALMDGQLQ). 3 disulfide bridges follow: C40-C73, C42-C66, and C56-C74.

It belongs to the sea anemone type 3 (BDS) potassium channel toxin family.

The protein localises to the secreted. Its subcellular location is the nematocyst. Functionally, toxin that inhibits rat ASIC3 channels (IC(50)=13.8 uM). Also able to bind T.californica muscle-type nicotinic acetylcholine receptors (nAChR), and human alpha-7/CHRNA7 nicotinic acetylcholine receptors. The chain is Pi-stichotoxin-Hmg5a from Heteractis magnifica (Magnificent sea anemone).